The sequence spans 130 residues: Small ribosomal subunit protein uS11 (130 aa).

Belongs to the universal ribosomal protein uS11 family. In terms of assembly, part of the 30S ribosomal subunit. Interacts with proteins S7 and S18. Binds to IF-3.

Its function is as follows. Located on the platform of the 30S subunit, it bridges several disparate RNA helices of the 16S rRNA. Forms part of the Shine-Dalgarno cleft in the 70S ribosome. The protein is Small ribosomal subunit protein uS11 of Thiobacillus denitrificans (strain ATCC 25259 / T1).